The primary structure comprises 198 residues: UPF0548 protein DR_2035 (198 aa).

Belongs to the UPF0548 family.

In Deinococcus radiodurans (strain ATCC 13939 / DSM 20539 / JCM 16871 / CCUG 27074 / LMG 4051 / NBRC 15346 / NCIMB 9279 / VKM B-1422 / R1), this protein is UPF0548 protein DR_2035.